A 202-amino-acid chain; its full sequence is MSTDTSKPARLPVTVEKPTPYTFDLGLLLANDPNPVNVPKTTDTQVLEQHLASVARDGAQVLINQLLTTTTITATKDGVLLTLPPPTTPLPREKPVPQPKPETKWQAFARRRGIKPKTREQRRNLQYNPTTGQWERKWGYKGANKRGETDPIIEVSAAKEAMRPEGTSVRGDKRREIRARVKKNQKQMLRNQRIAAEKMGKK.

The segment at 82-103 is disordered; that stretch reads TLPPPTTPLPREKPVPQPKPET.

It belongs to the RRS1 family. As to quaternary structure, component of a hexameric 5S RNP precursor complex, composed of 5S RNA, RRS1, RPF2, RPL5, RPL11 and SYO1; this complex acts as a precursor for ribosome assembly.

The protein resides in the nucleus. In terms of biological role, involved in ribosomal large subunit assembly. This Chaetomium thermophilum (strain DSM 1495 / CBS 144.50 / IMI 039719) (Thermochaetoides thermophila) protein is Ribosome biogenesis regulatory protein homolog.